A 441-amino-acid polypeptide reads, in one-letter code: ATP-dependent RNA helicase SUB2 (441 aa).

Acidic residues predominate over residues 1-17 (MSHEGEEELLDYSDSEE). Residues 1 to 47 (MSHEGEEELLDYSDSEEIALPSTTVESGSNGDAKAETTTVKEENTEQ) form a disordered region. A compositionally biased stretch (polar residues) spans 21–30 (PSTTVESGSN). The span at 33–46 (AKAETTTVKEENTE) shows a compositional bias: basic and acidic residues. A Q motif motif is present at residues 57-85 (TGFRDFLLKPELLRAIVDCGFEHPSEVQQ). The 176-residue stretch at 88–263 (IPQSILGTDV…KKFMSSPLEI (176 aa)) folds into the Helicase ATP-binding domain. 101–108 (AKAGVGKT) contacts ATP. The short motif at 210–213 (DECD) is the DECD box element. A Helicase C-terminal domain is found at 275 to 436 (GLQQYYVDVE…PYPAEGVDPS (162 aa)).

It belongs to the DEAD box helicase family. DECD subfamily.

Its subcellular location is the nucleus. The enzyme catalyses ATP + H2O = ADP + phosphate + H(+). ATP-binding RNA helicase involved in transcription elongation and required for the export of mRNA out of the nucleus. SUB2 also plays a role in pre-mRNA splicing and spliceosome assembly. May be involved in rDNA and telomeric silencing, and maintenance of genome integrity. This chain is ATP-dependent RNA helicase SUB2 (SUB2), found in Yarrowia lipolytica (strain CLIB 122 / E 150) (Yeast).